Consider the following 1412-residue polypeptide: DNA-directed RNA polymerase subunit beta' (1412 aa).

Zn(2+) contacts are provided by C70, C72, C85, and C88. Mg(2+)-binding residues include D458, D460, and D462. Residues C813, C887, C894, and C897 each contribute to the Zn(2+) site. The disordered stretch occupies residues 1388–1412 (EQALLTPATTAEAVVGEEPAPPPAQ). Over residues 1393–1405 (TPATTAEAVVGEE) the composition is skewed to low complexity.

This sequence belongs to the RNA polymerase beta' chain family. The RNAP catalytic core consists of 2 alpha, 1 beta, 1 beta' and 1 omega subunit. When a sigma factor is associated with the core the holoenzyme is formed, which can initiate transcription. Mg(2+) serves as cofactor. Requires Zn(2+) as cofactor.

It catalyses the reaction RNA(n) + a ribonucleoside 5'-triphosphate = RNA(n+1) + diphosphate. Its function is as follows. DNA-dependent RNA polymerase catalyzes the transcription of DNA into RNA using the four ribonucleoside triphosphates as substrates. In Methylibium petroleiphilum (strain ATCC BAA-1232 / LMG 22953 / PM1), this protein is DNA-directed RNA polymerase subunit beta'.